The sequence spans 343 residues: Small ribosomal subunit biogenesis GTPase RsgA (343 aa).

A CP-type G domain is found at 116-275 (RGQLKPVAAN…LIDSPGIREF (160 aa)). GTP-binding positions include 163–166 (NKAD) and 217–225 (GQSGVGKSS). Zn(2+) contacts are provided by C299, C304, H306, and C312.

It belongs to the TRAFAC class YlqF/YawG GTPase family. RsgA subfamily. Monomer. Associates with 30S ribosomal subunit, binds 16S rRNA. Zn(2+) is required as a cofactor.

It is found in the cytoplasm. Functionally, one of several proteins that assist in the late maturation steps of the functional core of the 30S ribosomal subunit. Helps release RbfA from mature subunits. May play a role in the assembly of ribosomal proteins into the subunit. Circularly permuted GTPase that catalyzes slow GTP hydrolysis, GTPase activity is stimulated by the 30S ribosomal subunit. The protein is Small ribosomal subunit biogenesis GTPase RsgA of Pseudomonas syringae pv. tomato (strain ATCC BAA-871 / DC3000).